Consider the following 579-residue polypeptide: Vacuolar protein 8 (579 aa).

Gly-2 carries N-myristoyl glycine lipidation. 3 S-palmitoyl cysteine lipidation sites follow: Cys-4, Cys-5, and Cys-7. ARM repeat units follow at residues 39–76 (NKDQ…FAEI), 77–116 (TEKY…NLAV), 118–157 (NENK…NLAT), 159–198 (DDNK…NMTH), 200–239 (GENR…NIAV), 241–282 (ESNR…NLAS), 284–323 (TNYQ…NISI), 325–365 (PLNE…NLAA), and 409–448 (DNTK…NLIS). Polar residues predominate over residues 534 to 556 (QDTNIDHNGNSNNIEGNGRSNKQ). Residues 534–560 (QDTNIDHNGNSNNIEGNGRSNKQSSEK) form a disordered region.

The protein belongs to the beta-catenin family.

It localises to the vacuole membrane. In terms of biological role, functions in both vacuole inheritance and protein targeting from the cytoplasm to vacuole. This chain is Vacuolar protein 8 (VAC8), found in Kluyveromyces lactis (strain ATCC 8585 / CBS 2359 / DSM 70799 / NBRC 1267 / NRRL Y-1140 / WM37) (Yeast).